Here is a 548-residue protein sequence, read N- to C-terminus: C-type lectin domain family 4 member F (548 aa).

Over 1 to 42 (MKEAELNRDMARYCTDNQCVSLQPQGLGPKSAALMAPRTLRH) the chain is Cytoplasmic. A helical; Signal-anchor for type II membrane protein transmembrane segment spans residues 43 to 69 (VQVILALMVVTVIFSLLALFVVASQPW). The Extracellular segment spans residues 70-548 (RPEWNKEPPS…STGWSAARVG (479 aa)). N-linked (GlcNAc...) asparagine glycosylation is found at Asn-86, Asn-92, Asn-115, Asn-132, Asn-209, and Asn-255. The C-type lectin domain occupies 438 to 538 (KFCTSQGAHL…GSSYPWVCKK (101 aa)). 2 cysteine pairs are disulfide-bonded: Cys-440-Cys-536 and Cys-516-Cys-528.

In terms of tissue distribution, kupffer cells.

It localises to the membrane. In terms of biological role, receptor with an affinity for galactose and fucose. Could be involved in endocytosis. The polypeptide is C-type lectin domain family 4 member F (Clec4f) (Mus musculus (Mouse)).